The primary structure comprises 412 residues: CinA-like protein (412 aa).

It belongs to the CinA family.

In Salinibacter ruber (strain DSM 13855 / M31), this protein is CinA-like protein.